We begin with the raw amino-acid sequence, 358 residues long: Glyoxylate/succinic semialdehyde reductase 2, chloroplastic (358 aa).

A chloroplast-targeting transit peptide spans Met1–Cys44. NADP(+) contacts are provided by residues Gly70–Asn84 and Thr161. Residue Lys236 is part of the active site. Lys304 lines the NADP(+) pocket.

The protein belongs to the HIBADH-related family. NP60 subfamily.

It localises to the plastid. It is found in the chloroplast stroma. It catalyses the reaction glycolate + NADP(+) = glyoxylate + NADPH + H(+). The catalysed reaction is 4-hydroxybutanoate + NADP(+) = succinate semialdehyde + NADPH + H(+). With respect to regulation, the ratio of NADPH/NADP(+) may regulate enzymatic activity. Its function is as follows. Catalyzes the NADPH-dependent reduction of glyoxylate to glycolate as well as succinic semialdehyde (SSA) to gamma-hydroxybutyrate in vitro. May function in redox homeostasis and play a role in oxidative stress tolerance by detoxifying glyoxylate and SSA generated in glycolate metabolism and GABA metabolism, respectively. This is Glyoxylate/succinic semialdehyde reductase 2, chloroplastic (GLYR2) from Arabidopsis thaliana (Mouse-ear cress).